The following is a 159-amino-acid chain: Crossover junction endodeoxyribonuclease RuvC (159 aa).

Catalysis depends on residues aspartate 7, glutamate 66, and aspartate 139. Mg(2+) is bound by residues aspartate 7, glutamate 66, and aspartate 139.

It belongs to the RuvC family. In terms of assembly, homodimer which binds Holliday junction (HJ) DNA. The HJ becomes 2-fold symmetrical on binding to RuvC with unstacked arms; it has a different conformation from HJ DNA in complex with RuvA. In the full resolvosome a probable DNA-RuvA(4)-RuvB(12)-RuvC(2) complex forms which resolves the HJ. It depends on Mg(2+) as a cofactor.

Its subcellular location is the cytoplasm. The enzyme catalyses Endonucleolytic cleavage at a junction such as a reciprocal single-stranded crossover between two homologous DNA duplexes (Holliday junction).. In terms of biological role, the RuvA-RuvB-RuvC complex processes Holliday junction (HJ) DNA during genetic recombination and DNA repair. Endonuclease that resolves HJ intermediates. Cleaves cruciform DNA by making single-stranded nicks across the HJ at symmetrical positions within the homologous arms, yielding a 5'-phosphate and a 3'-hydroxyl group; requires a central core of homology in the junction. The consensus cleavage sequence is 5'-(A/T)TT(C/G)-3'. Cleavage occurs on the 3'-side of the TT dinucleotide at the point of strand exchange. HJ branch migration catalyzed by RuvA-RuvB allows RuvC to scan DNA until it finds its consensus sequence, where it cleaves and resolves the cruciform DNA. The chain is Crossover junction endodeoxyribonuclease RuvC from Sulfurovum sp. (strain NBC37-1).